Reading from the N-terminus, the 224-residue chain is MFFNKKNNQDELKKLAATEAAKSITTEITLGVGTGSTVGFLIEELVNYRDKIKTVVSSSEDSTRKLKALGFDVVDLNYAGEIDLYIDGADECNNHKELIKGGGAALTREKICVAAAKKFICIIDESKKVNTLGNFPLPIEVIPMARSYIARQIVKLGGQPVYREQTITDNGNVILDVYNLKIDNPLKLETELNQITGVVTNGIFALKPADTVIMATKDSNIVVL.

Residues Thr-34–Thr-37, Asp-87–Asp-90, and Lys-100–Gly-103 each bind substrate. Glu-109 functions as the Proton acceptor in the catalytic mechanism. Residue Lys-127 participates in substrate binding.

This sequence belongs to the ribose 5-phosphate isomerase family. In terms of assembly, homodimer.

It carries out the reaction aldehydo-D-ribose 5-phosphate = D-ribulose 5-phosphate. The protein operates within carbohydrate degradation; pentose phosphate pathway; D-ribose 5-phosphate from D-ribulose 5-phosphate (non-oxidative stage): step 1/1. In terms of biological role, catalyzes the reversible conversion of ribose-5-phosphate to ribulose 5-phosphate. In Francisella tularensis subsp. tularensis (strain FSC 198), this protein is Ribose-5-phosphate isomerase A.